The sequence spans 140 residues: MLYLYLAVGGFCGAVGRYFLASFINRLWPGSFPLATWIINLGGCLAMGFILTYTLERLVMGPELRLGLTTGMLGAFTTFSTFSVETLHLLQGEKIPLALLYLFASLAGGLICMQTGIFLARLPLSSKALSSIITREDGEE.

The next 4 membrane-spanning stretches (helical) occupy residues 4–24, 32–52, 70–90, and 99–119; these read LYLAVGGFCGAVGRYFLASFI, FPLATWIINLGGCLAMGFILT, TGMLGAFTTFSTFSVETLHLL, and LLYLFASLAGGLICMQTGIFL. Positions 74 and 77 each coordinate Na(+).

This sequence belongs to the fluoride channel Fluc/FEX (TC 1.A.43) family.

Its subcellular location is the cell membrane. It carries out the reaction fluoride(in) = fluoride(out). Na(+) is not transported, but it plays an essential structural role and its presence is essential for fluoride channel function. Its function is as follows. Fluoride-specific ion channel. Important for reducing fluoride concentration in the cell, thus reducing its toxicity. The protein is Fluoride-specific ion channel FluC 1 of Moorella thermoacetica (strain ATCC 39073 / JCM 9320).